The sequence spans 119 residues: Large ribosomal subunit protein uL18 (119 aa).

This sequence belongs to the universal ribosomal protein uL18 family. In terms of assembly, part of the 50S ribosomal subunit; part of the 5S rRNA/L5/L18/L25 subcomplex. Contacts the 5S and 23S rRNAs.

In terms of biological role, this is one of the proteins that bind and probably mediate the attachment of the 5S RNA into the large ribosomal subunit, where it forms part of the central protuberance. The chain is Large ribosomal subunit protein uL18 from Anaeromyxobacter dehalogenans (strain 2CP-C).